A 413-amino-acid polypeptide reads, in one-letter code: 4-hydroxy-3-methylbut-2-en-1-yl diphosphate synthase (flavodoxin) (413 aa).

4 residues coordinate [4Fe-4S] cluster: C305, C308, C351, and E358.

It belongs to the IspG family. [4Fe-4S] cluster is required as a cofactor.

The enzyme catalyses (2E)-4-hydroxy-3-methylbut-2-enyl diphosphate + oxidized [flavodoxin] + H2O + 2 H(+) = 2-C-methyl-D-erythritol 2,4-cyclic diphosphate + reduced [flavodoxin]. It functions in the pathway isoprenoid biosynthesis; isopentenyl diphosphate biosynthesis via DXP pathway; isopentenyl diphosphate from 1-deoxy-D-xylulose 5-phosphate: step 5/6. In terms of biological role, converts 2C-methyl-D-erythritol 2,4-cyclodiphosphate (ME-2,4cPP) into 1-hydroxy-2-methyl-2-(E)-butenyl 4-diphosphate. The protein is 4-hydroxy-3-methylbut-2-en-1-yl diphosphate synthase (flavodoxin) of Bartonella tribocorum (strain CIP 105476 / IBS 506).